The following is a 392-amino-acid chain: MTLLGTALRPAATRVMLLGSGELGKEVAIECQRLGVEVIAVDRYADAPAMHVAHRSHVINMLDGDALRRVVELEKPHYIVPEIEAIATDMLIQLEEEGLNVVPCARATKLTMNREGIRRLAAEELQLPTSTYRFSDSESLFREAVAAIGYPCIVKPVMSSSGKGQTFIRSAEQLAQAWEYAQQGGRAGAGRVIVEGVVKFDFEITLLTVSAVDGVHFCAPVGHRQEDGDYRESWQPQQMSPLALERAQEIARKVVLALGGYGLFGVELFVCGDEVIFSEVSPRPHDTGMVTLISQDLSEFALHVRAFLGLPVGGIRQYGPAASAVILPQLTSQNVTFDNVQNAVGADLQIRLFGKPEIDGSRRLGVALATAESVVDAIERAKHAAGQVKVQG.

Residues 22 to 23 (EL) and E82 contribute to the N(1)-(5-phospho-beta-D-ribosyl)glycinamide site. Residues R114, K155, 160–165 (SSGKGQ), 195–198 (EGVV), and E203 contribute to the ATP site. The ATP-grasp domain occupies 119–308 (RLAAEELQLP…EFALHVRAFL (190 aa)). Mg(2+) is bound by residues E267 and E279. N(1)-(5-phospho-beta-D-ribosyl)glycinamide contacts are provided by residues D286, K355, and 362–363 (RR).

The protein belongs to the PurK/PurT family. As to quaternary structure, homodimer.

It catalyses the reaction N(1)-(5-phospho-beta-D-ribosyl)glycinamide + formate + ATP = N(2)-formyl-N(1)-(5-phospho-beta-D-ribosyl)glycinamide + ADP + phosphate + H(+). It functions in the pathway purine metabolism; IMP biosynthesis via de novo pathway; N(2)-formyl-N(1)-(5-phospho-D-ribosyl)glycinamide from N(1)-(5-phospho-D-ribosyl)glycinamide (formate route): step 1/1. In terms of biological role, involved in the de novo purine biosynthesis. Catalyzes the transfer of formate to 5-phospho-ribosyl-glycinamide (GAR), producing 5-phospho-ribosyl-N-formylglycinamide (FGAR). Formate is provided by PurU via hydrolysis of 10-formyl-tetrahydrofolate. The chain is Formate-dependent phosphoribosylglycinamide formyltransferase from Shigella dysenteriae serotype 1 (strain Sd197).